Consider the following 204-residue polypeptide: Putative AgrB-like protein (204 aa).

Transmembrane regions (helical) follow at residues Tyr-52–Leu-74, Leu-87–Ile-107, Asn-111–Ala-131, Ala-151–Ala-168, and Leu-173–Tyr-190.

It belongs to the AgrB family.

The protein localises to the cell membrane. Functionally, may be involved in the proteolytic processing of a quorum sensing system signal molecule precursor. The protein is Putative AgrB-like protein of Listeria monocytogenes serovar 1/2a (strain ATCC BAA-679 / EGD-e).